The primary structure comprises 799 residues: LPS-assembly protein LptD (799 aa).

A signal peptide spans 1 to 34 (MMHELDLRPHLARFAQRPLALLAWALLQGTSVNA).

The protein belongs to the LptD family. Component of the lipopolysaccharide transport and assembly complex. Interacts with LptE and LptA.

The protein resides in the cell outer membrane. Together with LptE, is involved in the assembly of lipopolysaccharide (LPS) at the surface of the outer membrane. The protein is LPS-assembly protein LptD of Albidiferax ferrireducens (strain ATCC BAA-621 / DSM 15236 / T118) (Rhodoferax ferrireducens).